An 83-amino-acid polypeptide reads, in one-letter code: Small ribosomal subunit protein bS20 (83 aa).

It belongs to the bacterial ribosomal protein bS20 family.

Its function is as follows. Binds directly to 16S ribosomal RNA. The sequence is that of Small ribosomal subunit protein bS20 from Flavobacterium johnsoniae (strain ATCC 17061 / DSM 2064 / JCM 8514 / BCRC 14874 / CCUG 350202 / NBRC 14942 / NCIMB 11054 / UW101) (Cytophaga johnsonae).